The sequence spans 536 residues: Phosphoenolpyruvate carboxykinase (ATP) (536 aa).

R61, Y195, and K201 together coordinate substrate. ATP contacts are provided by residues K201, H220, and 236–244; that span reads GLSGTGKTT. Residues K201 and H220 each contribute to the Mn(2+) site. Position 257 (D257) interacts with Mn(2+). Positions 285, 322, and 447 each coordinate ATP. R322 is a substrate binding site.

Belongs to the phosphoenolpyruvate carboxykinase (ATP) family. It depends on Mn(2+) as a cofactor.

It localises to the cytoplasm. It carries out the reaction oxaloacetate + ATP = phosphoenolpyruvate + ADP + CO2. Its pathway is carbohydrate biosynthesis; gluconeogenesis. Involved in the gluconeogenesis. Catalyzes the conversion of oxaloacetate (OAA) to phosphoenolpyruvate (PEP) through direct phosphoryl transfer between the nucleoside triphosphate and OAA. In Sinorhizobium medicae (strain WSM419) (Ensifer medicae), this protein is Phosphoenolpyruvate carboxykinase (ATP).